Here is a 266-residue protein sequence, read N- to C-terminus: Thymidylate synthase (266 aa).

Position 24 (Arg-24) interacts with dUMP. (6R)-5,10-methylene-5,6,7,8-tetrahydrofolate is bound at residue His-54. 129 to 130 (RR) lines the dUMP pocket. The active-site Nucleophile is the Cys-149. Residues 169–172 (RSAD), Asn-180, and 210–212 (HIY) each bind dUMP. Asp-172 contacts (6R)-5,10-methylene-5,6,7,8-tetrahydrofolate. Position 265 (Ala-265) interacts with (6R)-5,10-methylene-5,6,7,8-tetrahydrofolate.

This sequence belongs to the thymidylate synthase family. Bacterial-type ThyA subfamily. In terms of assembly, homodimer.

It localises to the cytoplasm. The enzyme catalyses dUMP + (6R)-5,10-methylene-5,6,7,8-tetrahydrofolate = 7,8-dihydrofolate + dTMP. The protein operates within pyrimidine metabolism; dTTP biosynthesis. Catalyzes the reductive methylation of 2'-deoxyuridine-5'-monophosphate (dUMP) to 2'-deoxythymidine-5'-monophosphate (dTMP) while utilizing 5,10-methylenetetrahydrofolate (mTHF) as the methyl donor and reductant in the reaction, yielding dihydrofolate (DHF) as a by-product. This enzymatic reaction provides an intracellular de novo source of dTMP, an essential precursor for DNA biosynthesis. This chain is Thymidylate synthase, found in Mycolicibacterium paratuberculosis (strain ATCC BAA-968 / K-10) (Mycobacterium paratuberculosis).